The primary structure comprises 186 residues: Threonylcarbamoyl-AMP synthase (186 aa).

Residues 5-186 (TQSINDAVKC…DAITGEILRL (182 aa)) enclose the YrdC-like domain.

This sequence belongs to the SUA5 family. TsaC subfamily.

The protein localises to the cytoplasm. It catalyses the reaction L-threonine + hydrogencarbonate + ATP = L-threonylcarbamoyladenylate + diphosphate + H2O. In terms of biological role, required for the formation of a threonylcarbamoyl group on adenosine at position 37 (t(6)A37) in tRNAs that read codons beginning with adenine. Catalyzes the conversion of L-threonine, HCO(3)(-)/CO(2) and ATP to give threonylcarbamoyl-AMP (TC-AMP) as the acyladenylate intermediate, with the release of diphosphate. This chain is Threonylcarbamoyl-AMP synthase, found in Coxiella burnetii (strain RSA 493 / Nine Mile phase I).